Reading from the N-terminus, the 1145-residue chain is Protein sumv-2 (1145 aa).

Over residues 1–13 (MKPGRKSLPKKNR) the composition is skewed to basic residues. Disordered stretches follow at residues 1-310 (MKPG…APPA), 429-464 (QSRT…QKAR), 999-1025 (HSAS…AGSE), 1040-1059 (QIAA…PRTE), and 1073-1145 (ITTG…ISLI). Residues 14 to 34 (ASNITEKMPTTSTEAQSSSSK) show a composition bias toward polar residues. Basic and acidic residues-rich tracts occupy residues 73-104 (KTTE…EPRK) and 216-225 (VPEKKPKIED). The span at 226–248 (APTTSSPKKSTPTSAPPTRASAR) shows a compositional bias: low complexity. A compositionally biased stretch (basic and acidic residues) spans 455–464 (GDEKRQQKAR). Over residues 999–1013 (HSASSSAAPSPVGAS) the composition is skewed to low complexity. Positions 1091 to 1102 (VIERGDFRDHRP) are enriched in basic and acidic residues. Over residues 1121–1136 (QQPPLPSPAPPPPRGP) the composition is skewed to pro residues.

Its function is as follows. Influences the activity of genes involved in vulval development. The chain is Protein sumv-2 from Caenorhabditis elegans.